The primary structure comprises 176 residues: Cytochrome b (176 aa).

Helical transmembrane passes span Phe-33–Met-53, Trp-77–Ile-98, and Trp-113–Leu-133. Heme b is bound by residues His-83 and His-97.

Belongs to the cytochrome b family. In terms of assembly, the cytochrome bc1 complex contains 11 subunits: 3 respiratory subunits (MT-CYB, CYC1 and UQCRFS1), 2 core proteins (UQCRC1 and UQCRC2) and 6 low-molecular weight proteins (UQCRH/QCR6, UQCRB/QCR7, UQCRQ/QCR8, UQCR10/QCR9, UQCR11/QCR10 and a cleavage product of UQCRFS1). This cytochrome bc1 complex then forms a dimer. Heme b is required as a cofactor.

Its subcellular location is the mitochondrion inner membrane. In terms of biological role, component of the ubiquinol-cytochrome c reductase complex (complex III or cytochrome b-c1 complex) that is part of the mitochondrial respiratory chain. The b-c1 complex mediates electron transfer from ubiquinol to cytochrome c. Contributes to the generation of a proton gradient across the mitochondrial membrane that is then used for ATP synthesis. The chain is Cytochrome b (MT-CYB) from Eumops perotis (Western bonneted bat).